The following is a 395-amino-acid chain: Protein-arginine rhamnosyltransferase (395 aa).

DTDP-beta-L-rhamnose is bound by residues 19–22 (NYGD), Y205, Q272, and 288–292 (RGEDS). D22 functions as the Proton acceptor in the catalytic mechanism. The active site involves E290.

Belongs to the glycosyltransferase 104 family.

It catalyses the reaction dTDP-beta-L-rhamnose + L-arginyl-[protein] = N(omega)-(alpha-L-rhamnosyl)-L-arginyl-[protein] + dTDP + H(+). In terms of biological role, protein-arginine rhamnosyltransferase that catalyzes the transfer of a single rhamnose to elongation factor P (EF-P) on 'Lys-32', a modification required for EF-P-dependent rescue of polyproline stalled ribosomes. This Shewanella oneidensis (strain ATCC 700550 / JCM 31522 / CIP 106686 / LMG 19005 / NCIMB 14063 / MR-1) protein is Protein-arginine rhamnosyltransferase.